The chain runs to 97 residues: Putative septation protein SpoVG (97 aa).

It belongs to the SpoVG family.

Functionally, essential for sporulation. Interferes with or is a negative regulator of the pathway leading to asymmetric septation. This is Putative septation protein SpoVG from Bacillus velezensis (strain DSM 23117 / BGSC 10A6 / LMG 26770 / FZB42) (Bacillus amyloliquefaciens subsp. plantarum).